The following is a 791-amino-acid chain: DUF1769 family protein duc1 (791 aa).

Positions 158–189 (ADSQESDTESLPEINDSSDVSLSDLPSTNVTP) are disordered. Residues 174–184 (SSDVSLSDLPS) are compositionally biased toward low complexity. The FFAT motif lies at 373 to 379 (RYFTALE). Tyr374 bears the Phosphotyrosine mark. The residue at position 376 (Thr376) is a Phosphothreonine. Disordered regions lie at residues 381–505 (QQDQ…SNRR), 542–606 (NVAG…VDGK), and 630–658 (PKPVRTATSQSKIPKPVKHIPSDSNNLDP). Over residues 415-426 (LIKRMSLRSKKS) the composition is skewed to basic residues. The segment covering 444-453 (STASAASTSA) has biased composition (low complexity). Residues 455–473 (KTEKEKKMSAPRRSLDKLI) show a composition bias toward basic and acidic residues. Phosphoserine occurs at positions 477 and 493. A compositionally biased stretch (basic residues) spans 477 to 487 (SLHRHHHHHHK). The span at 555–564 (EQTSITSGVP) shows a compositional bias: polar residues. Ser574 bears the Phosphoserine mark. The span at 574–586 (STPEKIVEERSID) shows a compositional bias: basic and acidic residues. The span at 587–601 (EVSQSNTPSSKQLPQ) shows a compositional bias: polar residues.

It belongs to the UPF0590 family. Interacts (via FFAT-motif) with scs2 (via MSP domain); the interaction is direct and serves to restrict the localization of duc1 to areas of cell membrane-endoplasmic reticulum contact sites, and away from the cell division site.

It localises to the cell membrane. Its function is as follows. Promotes the proper distribution of phosphatidylinositol 4,5-bisphosphate (PtdIns(4,5)P2/PIP2) synthesis at the cell membrane. May bind phosphatidylinositol 4,5-bisphosphate (PtdIns(4,5)P2/PIP2) and is required for robust anchoring of the contractile ring to the cell membrane. This chain is DUF1769 family protein duc1, found in Schizosaccharomyces pombe (strain 972 / ATCC 24843) (Fission yeast).